Here is a 517-residue protein sequence, read N- to C-terminus: Splicing factor U2AF 59 kDa subunit (517 aa).

Low complexity predominate over residues 1–13; the sequence is MDLSSRLSSGSSR. The interval 1-112 is disordered; the sequence is MDLSSRLSSG…PSRERSVRSI (112 aa). Over residues 20 to 89 the composition is skewed to basic and acidic residues; that stretch reads DYRDEEPRRE…RRYDDYEPRS (70 aa). RRM domains lie at 310–388 and 418–509; these read DKIY…FACV and RVLQ…FYGE.

The protein belongs to the splicing factor SR family. As to quaternary structure, forms a heterodimer with the U2AF small subunit. Can also form a homodimer. U2AF large subunit (U2AF59), U2AF small subunit (U2AF23) and SF1 (bpb1) interact to form a complex required for complex A formation. Interacts with wat1/pop3.

It is found in the nucleus. Its function is as follows. Necessary for the splicing of pre-mRNA. The SF1-U2AF59-U2AF23 complex has a role in the recognition of the branch site (5'-UACUAAC-3'), the pyrimidine tract and the 3'-splice site at the 3'-end of introns. This chain is Splicing factor U2AF 59 kDa subunit (prp2), found in Schizosaccharomyces pombe (strain 972 / ATCC 24843) (Fission yeast).